A 341-amino-acid chain; its full sequence is Heat-inducible transcription repressor HrcA (341 aa).

Belongs to the HrcA family.

In terms of biological role, negative regulator of class I heat shock genes (grpE-dnaK-dnaJ and groELS operons). Prevents heat-shock induction of these operons. The polypeptide is Heat-inducible transcription repressor HrcA (Symbiobacterium thermophilum (strain DSM 24528 / JCM 14929 / IAM 14863 / T)).